Consider the following 452-residue polypeptide: Methionine aminopeptidase 2 (452 aa).

A disordered region spans residues 1–91 (MTGVTGTEDT…KNKKKKKKKI (91 aa)). Residues 8 to 38 (EDTKVIESKINELNIDKSKPEKTNKVNKSDD) are compositionally biased toward basic and acidic residues. Acidic residues predominate over residues 39-62 (VDNDDVDNDDNDDEDNDDDDDEIT). Residues 74-91 (KKKKKNKNKNKKKKKKKI) show a composition bias toward basic residues. Residue His-203 coordinates substrate. A divalent metal cation is bound by residues Asp-223, Asp-234, and His-305. A substrate-binding site is contributed by His-313. The a divalent metal cation site is built by Glu-338 and Glu-433.

Belongs to the peptidase M24A family. Methionine aminopeptidase eukaryotic type 2 subfamily. The cofactor is Co(2+). Zn(2+) serves as cofactor. It depends on Mn(2+) as a cofactor. Fe(2+) is required as a cofactor.

The protein localises to the cytoplasm. The catalysed reaction is Release of N-terminal amino acids, preferentially methionine, from peptides and arylamides.. Functionally, cotranslationally removes the N-terminal methionine from nascent proteins. The N-terminal methionine is often cleaved when the second residue in the primary sequence is small and uncharged (Met-Ala-, Cys, Gly, Pro, Ser, Thr, or Val). The protein is Methionine aminopeptidase 2 of Candida dubliniensis (strain CD36 / ATCC MYA-646 / CBS 7987 / NCPF 3949 / NRRL Y-17841) (Yeast).